The following is a 387-amino-acid chain: MLKLKFCIVISFLILGSACSAIPSSGPSAKKVVSLGQQSEAQIPEVELIDVNHAVAQSLYKAQVNQSFTQFGDGYASTGTLNIGDVLDIMIWEAPPAVLFGGGLSSMGSGSAQQTKLPEQLVTARGTVSVPFVGDISVVGKTPGQVQEIIKGRLKKMANQPQVMVRLVQNNAANVSVIRAGNSVRMPLTAAGERVLDAVAAVGGSTANVQDTNVQLTRGNVVRTVALEDLVANPRQNILLRRGDVVTMITNPYTFTSMGAVGRTQEIGFSARGLSLSEAIGRMGGLQDRRSDARGVFVFRYTPLVELPAERQDKWIAQGYGSEAEIPTVYRVNMADAHSLFSMQRFPVKNKDVLYVSNAPLAEVQKFLSFVFSPVTSGANSINNLTN.

The signal sequence occupies residues 1-18 (MLKLKFCIVISFLILGSA). A lipid anchor (N-palmitoyl cysteine) is attached at Cys19. Cys19 is lipidated: S-diacylglycerol cysteine. Residues 19–29 (CSAIPSSGPSA) lie on the Periplasmic side of the membrane. Residues 30 to 39 (KKVVSLGQQS) traverse the membrane as a beta stranded segment. The Extracellular segment spans residues 40-53 (EAQIPEVELIDVNH). A beta stranded transmembrane segment spans residues 54–63 (AVAQSLYKAQ). Topologically, residues 64–79 (VNQSFTQFGDGYASTG) are periplasmic. Residues 80–89 (TLNIGDVLDI) traverse the membrane as a beta stranded segment. Residues 90-113 (MIWEAPPAVLFGGGLSSMGSGSAQ) lie on the Extracellular side of the membrane. Residues 114 to 123 (QTKLPEQLVT) form a beta stranded membrane-spanning segment. At 124-131 (ARGTVSVP) the chain is on the periplasmic side. Residues 132 to 141 (FVGDISVVGK) form a beta stranded membrane-spanning segment. The Extracellular segment spans residues 142–144 (TPG). Residues 145 to 154 (QVQEIIKGRL) form a beta stranded membrane-spanning segment. Over 155-157 (KKM) the chain is Periplasmic. A beta stranded membrane pass occupies residues 158 to 167 (ANQPQVMVRL). At 168 to 174 (VQNNAAN) the chain is on the extracellular side. The chain crosses the membrane as a beta stranded span at residues 175-184 (VSVIRAGNSV). Topologically, residues 185–387 (RMPLTAAGER…GANSINNLTN (203 aa)) are periplasmic.

The protein belongs to the BexD/CtrA/VexA family.

The protein localises to the cell outer membrane. In terms of biological role, involved in transport of capsular polysaccharides to the cell surface. May function as a membrane anchor for capsular polysaccharides. Possible porin properties. This chain is Capsule polysaccharide export outer membrane protein CtrA (ctrA), found in Neisseria meningitidis serogroup A / serotype 4A (strain DSM 15465 / Z2491).